Reading from the N-terminus, the 328-residue chain is UPF0194 membrane protein YPA_1093 (328 aa).

The N-terminal stretch at 1–22 is a signal peptide; that stretch reads MNRKKIIVAAVIVALLATLAYG. Coiled-coil stretches lie at residues 80–109 and 141–209; these read YLNALKQAQANVQSAQAQLALLKAGYREEE and KAVS…ILLA.

Belongs to the UPF0194 family.

The protein localises to the periplasm. In Yersinia pestis bv. Antiqua (strain Antiqua), this protein is UPF0194 membrane protein YPA_1093.